Here is a 114-residue protein sequence, read N- to C-terminus: Small ribosomal subunit protein bS6 (114 aa).

It belongs to the bacterial ribosomal protein bS6 family.

Its function is as follows. Binds together with bS18 to 16S ribosomal RNA. The sequence is that of Small ribosomal subunit protein bS6 from Bacteroides thetaiotaomicron (strain ATCC 29148 / DSM 2079 / JCM 5827 / CCUG 10774 / NCTC 10582 / VPI-5482 / E50).